The chain runs to 492 residues: Argininosuccinate lyase (492 aa).

The protein belongs to the lyase 1 family. Argininosuccinate lyase subfamily.

It is found in the cytoplasm. It catalyses the reaction 2-(N(omega)-L-arginino)succinate = fumarate + L-arginine. It functions in the pathway amino-acid biosynthesis; L-arginine biosynthesis; L-arginine from L-ornithine and carbamoyl phosphate: step 3/3. This is Argininosuccinate lyase from Methanocorpusculum labreanum (strain ATCC 43576 / DSM 4855 / Z).